Reading from the N-terminus, the 74-residue chain is Progonadoliberin-3 (74 aa).

The signal sequence occupies residues 1–15; that stretch reads VQVVVLALVAQVTLS. Pyrrolidone carboxylic acid is present on Q16. Glycine amide is present on G25.

Belongs to the GnRH family.

Its subcellular location is the secreted. In terms of biological role, stimulates the secretion of gonadotropins. The polypeptide is Progonadoliberin-3 (gnrh3) (Oncorhynchus mykiss (Rainbow trout)).